Reading from the N-terminus, the 180-residue chain is Bifunctional bis(5'-adenosyl)-triphosphatase/adenylylsulfatase FHIT (180 aa).

The 108-residue stretch at 27-134 (SYAFGPYKID…LPRKGGDFEK (108 aa)) folds into the HIT domain. Substrate-binding residues include N52 and Q108. The short motif at 119–123 (HVHIH) is the Histidine triad motif element. H121 serves as the catalytic Tele-AMP-histidine intermediate. H123 contributes to the substrate binding site.

It carries out the reaction P(1),P(3)-bis(5'-adenosyl) triphosphate + H2O = AMP + ADP + 2 H(+). It catalyses the reaction adenosine 5'-phosphosulfate + H2O = sulfate + AMP + 2 H(+). The enzyme catalyses adenosine 5'-phosphosulfate + NH4(+) = adenosine 5'-phosphoramidate + sulfate + 2 H(+). The catalysed reaction is adenosine 5'-phosphoramidate + H2O = AMP + NH4(+). Possesses dinucleoside triphosphate hydrolase activity. Cleaves P(1)-P(3)-bis(5'-adenosyl) triphosphate (Ap3A) to yield AMP and ADP. Exhibits adenylylsulfatase activity, hydrolyzing adenosine 5'-phosphosulfate to yield AMP and sulfate. Exhibits adenosine 5'-monophosphoramidase activity, hydrolyzing purine nucleotide phosphoramidates with a single phosphate group such as adenosine 5'monophosphoramidate (AMP-NH2) to yield AMP and NH2. Exhibits adenylylsulfate-ammonia adenylyltransferase, catalyzing the ammonolysis of adenosine 5'-phosphosulfate resulting in the formation of adenosine 5'-phosphoramidate. The chain is Bifunctional bis(5'-adenosyl)-triphosphatase/adenylylsulfatase FHIT from Arabidopsis thaliana (Mouse-ear cress).